An 87-amino-acid polypeptide reads, in one-letter code: uncharacterized protein (87 aa).

This is an uncharacterized protein from Ureaplasma parvum serovar 3 (strain ATCC 700970).